A 579-amino-acid polypeptide reads, in one-letter code: Glucose starvation modulator protein 1 (579 aa).

Positions 20–48 form a DNA-binding region, zn(2)-C6 fungal-type; that stretch reads CVFCHEKHLQCDLGRPCQNCSKRGIGDTC. The segment covering 43–53 has biased composition (basic and acidic residues); it reads GIGDTCRDKER. Disordered regions lie at residues 43-75 and 319-342; these read GIGD…STKS and QMAS…GETV. Basic residues predominate over residues 54-64; sequence KPRKRGPRKVK. A compositionally biased stretch (polar residues) spans 330–339; that stretch reads NDTSPESQGG. Residues 444–516 form the PAS domain; it reads LLEYESMAKL…DIFHEYLAFG (73 aa).

The protein belongs to the ERT1/acuK family.

It localises to the nucleus. Functionally, transcription factor which regulates nonfermentable carbon utilization. The protein is Glucose starvation modulator protein 1 (GSM1) of Kluyveromyces lactis (strain ATCC 8585 / CBS 2359 / DSM 70799 / NBRC 1267 / NRRL Y-1140 / WM37) (Yeast).